The chain runs to 218 residues: Protein N-lysine methyltransferase METTL21A (218 aa).

Residues Trp47, 73 to 75, Asp94, Trp125, and Ala143 contribute to the S-adenosyl-L-methionine site; that span reads GAG.

This sequence belongs to the methyltransferase superfamily. METTL21 family. As to quaternary structure, interacts with heat shock 70 family members; at least some of these proteins are methylation substrates.

The protein localises to the cytoplasm. It carries out the reaction L-lysyl-[protein] + 3 S-adenosyl-L-methionine = N(6),N(6),N(6)-trimethyl-L-lysyl-[protein] + 3 S-adenosyl-L-homocysteine + 3 H(+). Functionally, protein-lysine methyltransferase that selectively trimethylates residues in heat shock protein 70 (HSP70) family members. Contributes to the in vivo trimethylation of Lys residues in HSPA1 and HSPA8. In vitro methylates 'Lys-561' in HSPA1, 'Lys-564' in HSPA2, 'Lys-585' in HSPA5, 'Lys-563' in HSPA6 and 'Lys-561' in HSPA8. This is Protein N-lysine methyltransferase METTL21A (Mettl21A) from Mus musculus (Mouse).